A 464-amino-acid polypeptide reads, in one-letter code: 3-isopropylmalate dehydratase large subunit (464 aa).

Positions 337, 397, and 400 each coordinate [4Fe-4S] cluster.

The protein belongs to the aconitase/IPM isomerase family. LeuC type 1 subfamily. In terms of assembly, heterodimer of LeuC and LeuD. It depends on [4Fe-4S] cluster as a cofactor.

It catalyses the reaction (2R,3S)-3-isopropylmalate = (2S)-2-isopropylmalate. The protein operates within amino-acid biosynthesis; L-leucine biosynthesis; L-leucine from 3-methyl-2-oxobutanoate: step 2/4. Functionally, catalyzes the isomerization between 2-isopropylmalate and 3-isopropylmalate, via the formation of 2-isopropylmaleate. This is 3-isopropylmalate dehydratase large subunit from Bacillus cereus (strain B4264).